Reading from the N-terminus, the 229-residue chain is MEVLQQLGTYYSQNGGYVLQEFYRHFLMSVYGVLFAAIVGIPLGILIARYRRLSGWVFAVTNVIQTIPALAMLAVLMLVMGLGANTVILSLFLYSLLPIIRNTYTGIISIEHAYLESGKAMGMTKFQVLRMVELPLALSVIMAGLRTALVIAIGITAIGTFVGAGGLGDIIVRGSNATNGTAIILAGAIPTALMAVIADLVMGWLERALSPIKKKKGNFIIADRKTTSI.

The region spanning 22 to 202 (FYRHFLMSVY…LMAVIADLVM (181 aa)) is the ABC transmembrane type-1 domain. 5 helical membrane-spanning segments follow: residues 27–47 (LMSVYGVLFAAIVGIPLGILI), 55–74 (GWVFAVTNVIQTIPALAMLA), 78–100 (LVMGLGANTVILSLFLYSLLPII), 148–168 (ALVIAIGITAIGTFVGAGGLG), and 182–202 (AIILAGAIPTALMAVIADLVM).

Belongs to the binding-protein-dependent transport system permease family. CysTW subfamily. The complex is composed of two ATP-binding proteins (OpuCA), two transmembrane proteins (OpuCB and OpuCD) and a solute-binding protein (OpuCC).

It is found in the cell membrane. In terms of biological role, involved in a high affinity multicomponent binding-protein-dependent transport system for glycine betaine, carnitine and choline; probably responsible for the translocation of the substrate across the membrane. This Bacillus subtilis (strain 168) protein is Glycine betaine/carnitine/choline transport system permease protein OpuCD (opuCD).